The sequence spans 466 residues: MKTRQNVYELKDDTLSWYSRAVEEMKSRDINDPTSWWYQGAIHGYATYPSALTYWHDATGYPPSQQTVNSGFWNRCQHGTWYFLPWHRMYLFYFEEIVAKAIRDMGGPADWTLPYWNYCEAYNTSASPSNQQQALQIPPEFGSSQGPNADFASLWIKNRRNYVLNKNNVNPWPAMNEAEFTNSGGDISFGGGVTGFAHSGGQTGQLESLPHNVVHTDINGAMGNPDTAALDPIFWLHHANIDRLWQVWLAQAGRSNPVVNAWKDFRFKFHDANGQPVEIAVKDVETTQLLGYVYTPAFPLSSTTPARRSVPAMDVVGATSASFSVGDHMAPLDLTMVPQPARGARLLAARGGDEKRTILRISNVKGKGATSPIDLFITNRDNEEGNEENFVGCIGLFGLENASTPSVESDGSGLNFAIDISDTINKLRQRDDWDEDNIRVQLIPQSKQDSDVEINVGRVSLHSEID.

6 residues coordinate Cu cation: histidine 43, histidine 78, histidine 87, histidine 211, histidine 215, and histidine 238.

Belongs to the tyrosinase family. In terms of assembly, monomer. Formation of a dimer is observed when the protein is in its holo-form. The cofactor is Cu(2+). In terms of processing, in vitro, the C-terminal lid-domain is slowly cleaved off in an autoprocessive time dependent manner, leading to the formation of cleaved-HcTyr1. The processing rate is not influenced by factors such as pH and added metal ions.

The catalysed reaction is L-tyrosine + O2 = L-dopaquinone + H2O. It carries out the reaction 2 L-tyrosine + O2 = 2 L-dopa. The enzyme catalyses 2 L-dopa + O2 = 2 L-dopaquinone + 2 H2O. Its activity is regulated as follows. Cleavage of the lid-domain increases activity levels, affinity for substrate and turnover rate. Exhibits high saline tolerance. In terms of biological role, copper-containing oxidase that catalyzes the conversion of L-tyrosine to L-dopa and then to L-dopaquinone. Can use various phenols such as p-coumaric acid, phenol, pyrocatechol, syringol or pyrogallol. Accepts several of the constituents of lignin and potentially participates in lignin functionalization. This chain is Tyrosinase HcTyr1, found in Hahella sp. (strain CCB-MM4).